Here is a 103-residue protein sequence, read N- to C-terminus: Small ribosomal subunit protein uS10 (103 aa).

The protein belongs to the universal ribosomal protein uS10 family. In terms of assembly, part of the 30S ribosomal subunit.

Functionally, involved in the binding of tRNA to the ribosomes. In Alcanivorax borkumensis (strain ATCC 700651 / DSM 11573 / NCIMB 13689 / SK2), this protein is Small ribosomal subunit protein uS10.